Reading from the N-terminus, the 532-residue chain is Bifunctional purine biosynthesis protein PurH (532 aa).

In terms of domain architecture, MGS-like spans 1–148; it reads MQTPKPIKRA…KNHKDVTIVV (148 aa).

This sequence belongs to the PurH family.

It catalyses the reaction (6R)-10-formyltetrahydrofolate + 5-amino-1-(5-phospho-beta-D-ribosyl)imidazole-4-carboxamide = 5-formamido-1-(5-phospho-D-ribosyl)imidazole-4-carboxamide + (6S)-5,6,7,8-tetrahydrofolate. The enzyme catalyses IMP + H2O = 5-formamido-1-(5-phospho-D-ribosyl)imidazole-4-carboxamide. The protein operates within purine metabolism; IMP biosynthesis via de novo pathway; 5-formamido-1-(5-phospho-D-ribosyl)imidazole-4-carboxamide from 5-amino-1-(5-phospho-D-ribosyl)imidazole-4-carboxamide (10-formyl THF route): step 1/1. Its pathway is purine metabolism; IMP biosynthesis via de novo pathway; IMP from 5-formamido-1-(5-phospho-D-ribosyl)imidazole-4-carboxamide: step 1/1. The polypeptide is Bifunctional purine biosynthesis protein PurH (Alteromonas mediterranea (strain DSM 17117 / CIP 110805 / LMG 28347 / Deep ecotype)).